Here is a 317-residue protein sequence, read N- to C-terminus: Malate dehydrogenase (317 aa).

Residues 10 to 15 (GGGQIG) and Asp34 contribute to the NAD(+) site. Residues Arg83 and Arg89 each contribute to the substrate site. NAD(+) contacts are provided by residues Asn96 and 119–121 (ISN). Substrate contacts are provided by Asn121 and Arg152. His176 acts as the Proton acceptor in catalysis.

It belongs to the LDH/MDH superfamily. MDH type 3 family.

It catalyses the reaction (S)-malate + NAD(+) = oxaloacetate + NADH + H(+). Its function is as follows. Catalyzes the reversible oxidation of malate to oxaloacetate. This is Malate dehydrogenase from Geobacter metallireducens (strain ATCC 53774 / DSM 7210 / GS-15).